The following is a 1169-amino-acid chain: ATP-dependent helicase/deoxyribonuclease subunit B (1169 aa).

The 296-residue stretch at 1-296 (MTLRIVSGRS…QHVEANFANM (296 aa)) folds into the UvrD-like helicase ATP-binding domain. Position 8–15 (8–15 (GRSGTGKS)) interacts with ATP. The UvrD-like helicase C-terminal domain occupies 276 to 582 (YYTQRFQSED…EFSRIPPTLD (307 aa)). Positions 804, 1129, 1132, and 1138 each coordinate [4Fe-4S] cluster.

The protein belongs to the helicase family. AddB/RexB type 1 subfamily. Heterodimer of AddA and AddB. The cofactor is Mg(2+). [4Fe-4S] cluster is required as a cofactor.

Its function is as follows. The heterodimer acts as both an ATP-dependent DNA helicase and an ATP-dependent, dual-direction single-stranded exonuclease. Recognizes the chi site generating a DNA molecule suitable for the initiation of homologous recombination. The AddB subunit has 5' -&gt; 3' nuclease activity but not helicase activity. The polypeptide is ATP-dependent helicase/deoxyribonuclease subunit B (Lysinibacillus sphaericus (strain C3-41)).